The chain runs to 219 residues: Small ribosomal subunit protein uS3 (219 aa).

The 69-residue stretch at 38–106 (IREYINVRLK…RVHINILEVK (69 aa)) folds into the KH type-2 domain.

This sequence belongs to the universal ribosomal protein uS3 family. In terms of assembly, part of the 30S ribosomal subunit. Forms a tight complex with proteins S10 and S14.

Functionally, binds the lower part of the 30S subunit head. Binds mRNA in the 70S ribosome, positioning it for translation. The polypeptide is Small ribosomal subunit protein uS3 (Bacillus thuringiensis (strain Al Hakam)).